A 98-amino-acid polypeptide reads, in one-letter code: NADH-ubiquinone oxidoreductase chain 4L (98 aa).

3 helical membrane passes run 1–21 (MPSI…GMLV), 29–49 (SLLC…LTAL), and 61–81 (IILL…LVMV).

It belongs to the complex I subunit 4L family. Core subunit of respiratory chain NADH dehydrogenase (Complex I) which is composed of 45 different subunits.

It is found in the mitochondrion inner membrane. The catalysed reaction is a ubiquinone + NADH + 5 H(+)(in) = a ubiquinol + NAD(+) + 4 H(+)(out). Its function is as follows. Core subunit of the mitochondrial membrane respiratory chain NADH dehydrogenase (Complex I) which catalyzes electron transfer from NADH through the respiratory chain, using ubiquinone as an electron acceptor. Part of the enzyme membrane arm which is embedded in the lipid bilayer and involved in proton translocation. The sequence is that of NADH-ubiquinone oxidoreductase chain 4L (MT-ND4L) from Oryctolagus cuniculus (Rabbit).